Reading from the N-terminus, the 209-residue chain is MASPAPLVASISHQMVALQTLQLLQQEWGWGDGPSAPGSPRGPDHVPIAQARRPGQLRTRRGLGRGSIGARGSPEAGGLRGAEGGAELLPFPRDRGPCTLARMAMRSALARVVDSTSELVSVEQTLLGPLQQERPFPVHLKDSVEFRNICSHLALQIEGQQFDRDLNAAHQCLKTIVKKLIQSLANLPSDAHVVACASLRQILQNLPDV.

Residues Trp-28–Glu-87 form a disordered region.

This chain is Leukemia-associated protein 7 homolog (Dleu7), found in Mus musculus (Mouse).